Here is a 197-residue protein sequence, read N- to C-terminus: Large ribosomal subunit protein bL25 (197 aa).

The protein belongs to the bacterial ribosomal protein bL25 family. CTC subfamily. Part of the 50S ribosomal subunit; part of the 5S rRNA/L5/L18/L25 subcomplex. Contacts the 5S rRNA. Binds to the 5S rRNA independently of L5 and L18.

This is one of the proteins that binds to the 5S RNA in the ribosome where it forms part of the central protuberance. The chain is Large ribosomal subunit protein bL25 from Streptomyces avermitilis (strain ATCC 31267 / DSM 46492 / JCM 5070 / NBRC 14893 / NCIMB 12804 / NRRL 8165 / MA-4680).